The primary structure comprises 201 residues: LexA repressor 1 (201 aa).

Positions leucine 27–glutamine 47 form a DNA-binding region, H-T-H motif. Residues serine 122 and lysine 159 each act as for autocatalytic cleavage activity in the active site.

It belongs to the peptidase S24 family. As to quaternary structure, homodimer.

The enzyme catalyses Hydrolysis of Ala-|-Gly bond in repressor LexA.. In terms of biological role, represses a number of genes involved in the response to DNA damage (SOS response), including recA and lexA. In the presence of single-stranded DNA, RecA interacts with LexA causing an autocatalytic cleavage which disrupts the DNA-binding part of LexA, leading to derepression of the SOS regulon and eventually DNA repair. The protein is LexA repressor 1 of Xanthomonas axonopodis pv. citri (strain 306).